We begin with the raw amino-acid sequence, 334 residues long: MDAKETSATDLKRPREEDDNGGAATMETENGDQKKEPACFSTVIPGWFSEMSPMWPGEAHSLKVEKVLFQGKSDYQDVIVFQSATYGKVLVLDGVIQLTERDECAYQEMITHLPLCSIPNPKKVLVIGGGDGGVLREVARHASIEQIDMCEIDKMVVDVSKQFFPDVAIGYEDPRVNLVIGDGVAFLKNAAEGSYDAVIVDSSDPIGPAKELFEKPFFQSVARALRPGGVVCTQAESLWLHMDIIEDIVSNCREIFKGSVNYAWTSVPTYPSGVIGFMLCSTEGPDVDFKHPLNPIDESSSKSNGPLKFYNAEIHSAAFCLPSFAKKVIESKAN.

The segment covering 1–16 (MDAKETSATDLKRPRE) has biased composition (basic and acidic residues). Residues 1 to 35 (MDAKETSATDLKRPREEDDNGGAATMETENGDQKK) are disordered. In terms of domain architecture, PABS spans 45–282 (PGWFSEMSPM…GVIGFMLCST (238 aa)). Q76 lines the S-adenosyl 3-(methylsulfanyl)propylamine pocket. Y106 contacts putrescine. S-adenosyl 3-(methylsulfanyl)propylamine-binding positions include Q107, D131, E151, 182–183 (DG), and D201. Residue D201 is the Proton acceptor of the active site. Residues 201 to 204 (DSSD) and Y270 contribute to the putrescine site.

The protein belongs to the spermidine/spermine synthase family. Homotetramer and heterodimer. Component of a multiprotein complex. Interacts with SPMS and SPDSYN2.

It carries out the reaction S-adenosyl 3-(methylsulfanyl)propylamine + putrescine = S-methyl-5'-thioadenosine + spermidine + H(+). Its pathway is amine and polyamine biosynthesis; spermidine biosynthesis; spermidine from putrescine: step 1/1. The polypeptide is Spermidine synthase 1 (SPDSYN1) (Arabidopsis thaliana (Mouse-ear cress)).